A 322-amino-acid chain; its full sequence is MLPFNSCVYVLLIISLMSNCRALCRATALQGRSLCATGGPDAAFRAEHERLSAFESRPSSGSYDMRRALEPIEIETWFHIVSGETDADLVTDEMVILQLHYLQKAYEKASISYRLKGVTRHINETWARNGDDSAMKKALRRGGYSTLNVYFQTNLQPPSTTDFARWTSDGDNRHAYNSDLAPLSVLGFCTLPDPSINSSSPRSSYSKDGCNVLAKTMPGGPMTHYNRGGTAIHEIGHWNGLLHTFEGESCSEDNAGDYIADTPQQSVPTDGCPSQKDSCPDSPGLDDIHNFMDYSSDDCYASFTSNQLKRMRDMWFSMRKGK.

A signal peptide spans 1 to 22; the sequence is MLPFNSCVYVLLIISLMSNCRA. Asn123 and Asn197 each carry an N-linked (GlcNAc...) asparagine glycan. Residue His233 participates in Zn(2+) binding. Glu234 is a catalytic residue. Residue His237 coordinates Zn(2+). Residues Cys272 and Cys299 are joined by a disulfide bond.

It belongs to the peptidase M43B family.

It is found in the secreted. In terms of biological role, secreted metalloproteinase that allows assimilation of proteinaceous substrates. Plays a pivotal role as a pathogenicity determinant during infections and contributes to the ability of the pathogen to persist within the mammalian host. The sequence is that of Extracellular metalloprotease AFUA_1G07730 from Aspergillus fumigatus (strain ATCC MYA-4609 / CBS 101355 / FGSC A1100 / Af293) (Neosartorya fumigata).